The following is a 450-amino-acid chain: Perilipin-2 (450 aa).

An N-acetylalanine modification is found at alanine 2. Phosphoserine is present on serine 215. Tyrosine 232 bears the Phosphotyrosine mark. The segment at 411–450 (ESESAQAPGTTRRPGRWSRKHPKPVPVSNAEGSQPDDSSS) is disordered. Residues 423–433 (RPGRWSRKHPK) are compositionally biased toward basic residues. The segment covering 440–450 (AEGSQPDDSSS) has biased composition (polar residues).

This sequence belongs to the perilipin family. In terms of assembly, interacts with IRGC. Acylated; primarily with C14, C16 and C18 fatty acids. Post-translationally, phosphorylation at Tyr-232 by isoform 1 of CHKA (CHKalpha2) promotes dissociation from lipid droplets: dissociation is followed by recruitment of autophagosome machinery to lipid droplets and subsequent lipid droplet lipolysis. In terms of processing, polyubiquitination of Nt-acetylatable A-PLIN2 by MARCHF6 lead to degradation by 26S proteasomes. Milk lipid globules.

Its subcellular location is the membrane. The protein resides in the lipid droplet. Functionally, structural component of lipid droplets, which is required for the formation and maintenance of lipid storage droplets. This is Perilipin-2 (PLIN2) from Bos taurus (Bovine).